A 726-amino-acid chain; its full sequence is A-type inclusion protein A25 homolog (726 aa).

A disordered region spans residues 342–361 (TNTGIEEPHATGGDKEDQPI). The span at 347–360 (EEPHATGGDKEDQP) shows a compositional bias: basic and acidic residues. 4 consecutive repeat copies span residues 612–634 (RELE…CTRN), 639–661 (QEVD…CIES), 667–689 (TEIS…CRGN), and 691–713 (TEIS…CRRN). Residues 612–713 (RELEEERRRV…ERQLNDCRRN (102 aa)) form a 4 X approximate tandem repeats region.

It belongs to the poxviridae A25 protein family. Interacts (via N-terminus) with protein A26.

The protein resides in the virion. In terms of biological role, structural protein that forms a matrix surrounding the mature virion (MV) through interaction with protein A26. Presence of protein A25 in the virion structurally prevents direct virus-cell fusion mechanism. In Camelus, this protein is A-type inclusion protein A25 homolog.